The chain runs to 74 residues: Protein krueppel (74 aa).

4 C2H2-type zinc fingers span residues 1-4 (ERTH), 10-32 (FKCP…MRLH), 38-60 (YHCS…LRVH), and 66-74 (YTCEICKAK).

This sequence belongs to the krueppel C2H2-type zinc-finger protein family.

Its subcellular location is the nucleus. Krueppel is a gap class segmentation protein. In Bradysia coprophila (Dark-winged fungus gnat), this protein is Protein krueppel (Kr).